We begin with the raw amino-acid sequence, 265 residues long: Transmembrane protein 270 (265 aa).

3 consecutive transmembrane segments (helical) span residues 72 to 92 (PLGQALWAGLALIQVPVWLVL), 130 to 150 (LFLSCLHGLMLVALLLVVVTW), and 185 to 205 (LYWWVETMTALTSWHLAYLIT). Residues 229–265 (QEVEPQEVSGSSLLPSLSASSDSESGTVLPEQETPRE) are disordered. The span at 237–253 (SGSSLLPSLSASSDSES) shows a compositional bias: low complexity.

The protein localises to the membrane. In Homo sapiens (Human), this protein is Transmembrane protein 270.